Consider the following 190-residue polypeptide: Xanthine phosphoribosyltransferase 1 (190 aa).

Residues L20 and N27 each contribute to the xanthine site. A128–A132 lines the 5-phospho-alpha-D-ribose 1-diphosphate pocket. A xanthine-binding site is contributed by K156.

This sequence belongs to the purine/pyrimidine phosphoribosyltransferase family. Xpt subfamily. Homodimer.

It is found in the cytoplasm. It catalyses the reaction XMP + diphosphate = xanthine + 5-phospho-alpha-D-ribose 1-diphosphate. The protein operates within purine metabolism; XMP biosynthesis via salvage pathway; XMP from xanthine: step 1/1. In terms of biological role, converts the preformed base xanthine, a product of nucleic acid breakdown, to xanthosine 5'-monophosphate (XMP), so it can be reused for RNA or DNA synthesis. In Clostridium botulinum (strain ATCC 19397 / Type A), this protein is Xanthine phosphoribosyltransferase 1.